The sequence spans 158 residues: Disease resistance response protein DRRG49-C (158 aa).

The protein belongs to the BetVI family.

The chain is Disease resistance response protein DRRG49-C from Pisum sativum (Garden pea).